The chain runs to 143 residues: Hemoglobin subunit alpha-1 (143 aa).

An N-acetylserine modification is found at serine 2. The 142-residue stretch at 2–143 (SLSTKDKETV…VSLALAEKYR (142 aa)) folds into the Globin domain. Residue histidine 60 participates in O2 binding. Histidine 89 provides a ligand contact to heme b.

The protein belongs to the globin family. In terms of assembly, hb1 is a heterotetramer of two alpha-1 chains and two beta-1 chains. Red blood cells.

Functionally, involved in oxygen transport from gills to the various peripheral tissues. The polypeptide is Hemoglobin subunit alpha-1 (Liparis tunicatus (Kelp snailfish)).